We begin with the raw amino-acid sequence, 502 residues long: Probable glycine dehydrogenase (decarboxylating) subunit 2 (502 aa).

Lys273 carries the N6-(pyridoxal phosphate)lysine modification.

Belongs to the GcvP family. C-terminal subunit subfamily. As to quaternary structure, the glycine cleavage system is composed of four proteins: P, T, L and H. In this organism, the P 'protein' is a heterodimer of two subunits. Pyridoxal 5'-phosphate is required as a cofactor.

The catalysed reaction is N(6)-[(R)-lipoyl]-L-lysyl-[glycine-cleavage complex H protein] + glycine + H(+) = N(6)-[(R)-S(8)-aminomethyldihydrolipoyl]-L-lysyl-[glycine-cleavage complex H protein] + CO2. Functionally, the glycine cleavage system catalyzes the degradation of glycine. The P protein binds the alpha-amino group of glycine through its pyridoxal phosphate cofactor; CO(2) is released and the remaining methylamine moiety is then transferred to the lipoamide cofactor of the H protein. The polypeptide is Probable glycine dehydrogenase (decarboxylating) subunit 2 (Pyrococcus furiosus (strain ATCC 43587 / DSM 3638 / JCM 8422 / Vc1)).